The chain runs to 377 residues: Histidinol-phosphate aminotransferase (377 aa).

Lys232 bears the N6-(pyridoxal phosphate)lysine mark.

The protein belongs to the class-II pyridoxal-phosphate-dependent aminotransferase family. Histidinol-phosphate aminotransferase subfamily. Homodimer. Requires pyridoxal 5'-phosphate as cofactor.

It catalyses the reaction L-histidinol phosphate + 2-oxoglutarate = 3-(imidazol-4-yl)-2-oxopropyl phosphate + L-glutamate. The protein operates within amino-acid biosynthesis; L-histidine biosynthesis; L-histidine from 5-phospho-alpha-D-ribose 1-diphosphate: step 7/9. The protein is Histidinol-phosphate aminotransferase of Mycobacterium sp. (strain KMS).